Reading from the N-terminus, the 135-residue chain is HTH-type transcriptional repressor RghR (135 aa).

One can recognise an HTH cro/C1-type domain in the interval 8–63 (LRALREERKLTVNQLATYSGVSAAGISRIENGKRGVPKPATIKKLAEALKIPYEGL). The segment at residues 19 to 38 (VNQLATYSGVSAAGISRIEN) is a DNA-binding region (H-T-H motif).

In terms of biological role, represses the expression of yvaM and both rapG and rapH. Binds directly to the promoter regions of yvaM, rapG and rapH. This Bacillus subtilis (strain 168) protein is HTH-type transcriptional repressor RghR (rghR).